A 317-amino-acid chain; its full sequence is MTISVEKPIFEEVSAFEKSGDNIGELKLDGGFSMPKMDTNDDEAFLAPEMNAFGRQFRDYDVESERQKGVEEFYRLQHINQTVDFVKKMRAEYGKLDKMVMSIWECCELLNEVVDESDPDLDEPQIQHLLQSAEAIRKDYPNEDWLHLTALIHDLGKVITLPQFGGLPQWAVVGDTFPVGCAFDESNVHHKYFVENPDFHNETYNTKNGIYSEGCGLNNVMMSWGHDDYMYLVAKENGSTLPSAGQFIIRYHSFYPLHTAGEYTHLMNEEDKENLKWLHVFNKYDLYSKSKVHVDVEKVKPYYMSLIKKYFPENLRW.

Substrate contacts are provided by residues Arg-58 and Asp-115–Ser-117. 3 residues coordinate Fe cation: His-128, His-153, and Asp-154. Residues Lys-157 and Gly-174–Asp-175 each bind substrate. Fe cation-binding residues include His-226, His-252, and Asp-285. His-252–Ser-253 contacts substrate.

This sequence belongs to the myo-inositol oxygenase family. Fe cation is required as a cofactor. As to expression, expressed in flowers, leaves, siliques, and to a lesser extent in roots.

It localises to the cytoplasm. It catalyses the reaction myo-inositol + O2 = D-glucuronate + H2O + H(+). It participates in polyol metabolism; myo-inositol degradation into D-glucuronate; D-glucuronate from myo-inositol: step 1/1. Its function is as follows. Catalyzes the oxygenative cleavage of myo-inositol to D-glucuronate. Involved in the biosynthesis of UDP-glucuronic acid (UDP-GlcA), providing nucleotide sugars for cell-wall polymers. May be also involved in plant ascorbate biosynthesis. This is Inositol oxygenase 4 (MIOX4) from Arabidopsis thaliana (Mouse-ear cress).